The chain runs to 641 residues: Single-strand DNA endonuclease 1 (641 aa).

The interval 1–90 (MGVKNLWDIL…SLKLATYRRR (90 aa)) is N-domain. The segment at 2 to 97 (GVKNLWDILE…RRRLGSISHA (96 aa)) is XPG-N domain. Mg(2+) is bound by residues Asp-30, Asp-76, Glu-144, Glu-146, Asp-165, Asp-167, and Asp-217. The segment at 132–217 (MALGIPCLDG…ISLAVLLGSD (86 aa)) is XPG-I domain. I-domain regions lie at residues 132 to 220 (MALG…DYSN) and 132 to 221 (MALG…YSNG). The segment at 217 to 350 (DYSNGVNGFG…ILPKIAEREL (134 aa)) is 5'-3' exonuclease domain. 2 disordered regions span residues 428–448 (KGEE…QAAV) and 572–615 (VGSH…RVHH). The segment covering 580-590 (DGGGGGGGGVA) has biased composition (gly residues).

This sequence belongs to the XPG/RAD2 endonuclease family. GEN subfamily. The cofactor is Mg(2+). In terms of tissue distribution, highly expressed in shoot apical meristem (SAM) and young leaves. Expressed in roots, flag leaf and panicles.

Its subcellular location is the nucleus. Functionally, single-stranded DNA endonuclease activity in vitro. May not be active as double-stranded DNA endonuclease. Endonuclease which cleaves flap structures at the junction between single-stranded DNA and double-stranded DNA with a specific cleavage site in the 5' overhang strand exactly one nucleotide 3' of the branch point. Structure- and sequence-specific nuclease that resolves holliday junctions (HJs) by symmetrically oriented incisions in two opposing strands near the junction point, thus leading to ligatable products; HJs are physical links between homologous DNA molecules that arise as central intermediary structures during homologous recombination and repair in meiotic and somatic cells. Probably involved in the resolution of toxic replication structures to ensure genome stability, and to maintain telomere integrity and replication. The protein is Single-strand DNA endonuclease 1 of Oryza sativa subsp. japonica (Rice).